A 555-amino-acid chain; its full sequence is Formate--tetrahydrofolate ligase (555 aa).

65 to 72 (TPAGEGKS) serves as a coordination point for ATP.

The protein belongs to the formate--tetrahydrofolate ligase family.

The catalysed reaction is (6S)-5,6,7,8-tetrahydrofolate + formate + ATP = (6R)-10-formyltetrahydrofolate + ADP + phosphate. Its pathway is one-carbon metabolism; tetrahydrofolate interconversion. This chain is Formate--tetrahydrofolate ligase, found in Staphylococcus aureus (strain USA300).